A 229-amino-acid chain; its full sequence is Transcriptional regulatory protein YxdJ (229 aa).

The Response regulatory domain occupies 3 to 116; it reads KIMIVEDSED…IVLAKIKSQI (114 aa). Asp52 carries the post-translational modification 4-aspartylphosphate. Residues 129–227 constitute a DNA-binding region (ompR/PhoB-type); it reads EKVVEYAGVQ…VRGEGYQLRA (99 aa).

Post-translationally, phosphorylated by YxdK.

The protein resides in the cytoplasm. Its function is as follows. Probable member of the two-component regulatory system YxdK/YxdJ. Positively regulates the expression of the yxdLMyxeA operon by direct interaction with its promoter region. Could also indirectly regulate the expression of the dlt operon. This is Transcriptional regulatory protein YxdJ (yxdJ) from Bacillus subtilis (strain 168).